Consider the following 162-residue polypeptide: MSSFTHFNEQGRAKMVDITNKEDTVRVAVAKTSVTVSEEIYEKMTNNAIEKGDVLAVAQVAGVMAAKKTADLIPMCHPLMLKGVDIAFSWENEADAYKLVITATVKTKGSTGVEMEALTAASVCALTVYDMCKALDKGMIIGPTYLVEKTGGKSGHYRRKTD.

Substrate-binding positions include 75–77 (MCH) and 115–116 (ME). D130 is a catalytic residue.

Belongs to the MoaC family. In terms of assembly, homohexamer; trimer of dimers.

It carries out the reaction (8S)-3',8-cyclo-7,8-dihydroguanosine 5'-triphosphate = cyclic pyranopterin phosphate + diphosphate. The protein operates within cofactor biosynthesis; molybdopterin biosynthesis. Functionally, catalyzes the conversion of (8S)-3',8-cyclo-7,8-dihydroguanosine 5'-triphosphate to cyclic pyranopterin monophosphate (cPMP). The chain is Cyclic pyranopterin monophosphate synthase from Geobacillus thermodenitrificans (strain NG80-2).